Reading from the N-terminus, the 252-residue chain is Imidazole glycerol phosphate synthase subunit HisF (252 aa).

Residues aspartate 11 and aspartate 130 contribute to the active site.

It belongs to the HisA/HisF family. As to quaternary structure, heterodimer of HisH and HisF.

The protein localises to the cytoplasm. The enzyme catalyses 5-[(5-phospho-1-deoxy-D-ribulos-1-ylimino)methylamino]-1-(5-phospho-beta-D-ribosyl)imidazole-4-carboxamide + L-glutamine = D-erythro-1-(imidazol-4-yl)glycerol 3-phosphate + 5-amino-1-(5-phospho-beta-D-ribosyl)imidazole-4-carboxamide + L-glutamate + H(+). It participates in amino-acid biosynthesis; L-histidine biosynthesis; L-histidine from 5-phospho-alpha-D-ribose 1-diphosphate: step 5/9. IGPS catalyzes the conversion of PRFAR and glutamine to IGP, AICAR and glutamate. The HisF subunit catalyzes the cyclization activity that produces IGP and AICAR from PRFAR using the ammonia provided by the HisH subunit. The chain is Imidazole glycerol phosphate synthase subunit HisF from Bacillus cytotoxicus (strain DSM 22905 / CIP 110041 / 391-98 / NVH 391-98).